The sequence spans 438 residues: uncharacterized protein (438 aa).

Residues 23–193 enclose the FAD-binding PCMH-type domain; it reads IHAKPPVVVV…VNATIRLTAA (171 aa). FAD contacts are provided by residues 55 to 59, 60 to 61, glutamine 65, aspartate 117, threonine 122, 128 to 132, isoleucine 183, tyrosine 393, and 430 to 433; these read VRGSG, HS, SVGGF, and APGY. Pros-8alpha-FAD histidine is present on histidine 60.

The protein belongs to the oxygen-dependent FAD-linked oxidoreductase family. The cofactor is FAD.

The FAS-operon encodes genes involved in cytokinin production and in host plant fasciation (leafy gall). This is an uncharacterized protein from Rhodococcoides fascians (Rhodococcus fascians).